Consider the following 125-residue polypeptide: Small ribosomal subunit protein uS13 (125 aa).

The interval 95-125 (GLPLRGQRTKTNARTRKGKRKTVANKKIASK) is disordered.

Belongs to the universal ribosomal protein uS13 family. As to quaternary structure, part of the 30S ribosomal subunit. Forms a loose heterodimer with protein S19. Forms two bridges to the 50S subunit in the 70S ribosome.

Functionally, located at the top of the head of the 30S subunit, it contacts several helices of the 16S rRNA. In the 70S ribosome it contacts the 23S rRNA (bridge B1a) and protein L5 of the 50S subunit (bridge B1b), connecting the 2 subunits; these bridges are implicated in subunit movement. Contacts the tRNAs in the A and P-sites. This Borrelia garinii subsp. bavariensis (strain ATCC BAA-2496 / DSM 23469 / PBi) (Borreliella bavariensis) protein is Small ribosomal subunit protein uS13.